A 62-amino-acid polypeptide reads, in one-letter code: MDPGECTCMSGGICICGDNCKCTTCSCKTCRKSCCPCCPPGCAKCARGCICKGGSDKCSCCP.

20 residues coordinate a divalent metal cation: C6, C8, C14, C16, C20, C22, C25, C27, C30, C34, C35, C37, C38, C42, C45, C49, C51, C58, C60, and C61.

It belongs to the metallothionein superfamily. Type 1 family. In terms of tissue distribution, expressed exclusively in stratified squamous epithelia associated with oral epithelia, esophagus, upper stomach, tail, footpads and neonatal skin.

Seems to bind zinc and copper. Could play a special role in regulating zinc metabolism during the differentiation of stratified epithelia. The sequence is that of Metallothionein-4 (Mt4) from Mus musculus (Mouse).